Here is a 497-residue protein sequence, read N- to C-terminus: Guanosine-5'-triphosphate,3'-diphosphate pyrophosphatase (497 aa).

It belongs to the GppA/Ppx family. GppA subfamily.

The catalysed reaction is guanosine 3'-diphosphate 5'-triphosphate + H2O = guanosine 3',5'-bis(diphosphate) + phosphate + H(+). Its pathway is purine metabolism; ppGpp biosynthesis; ppGpp from GTP: step 2/2. Its function is as follows. Catalyzes the conversion of pppGpp to ppGpp. Guanosine pentaphosphate (pppGpp) is a cytoplasmic signaling molecule which together with ppGpp controls the 'stringent response', an adaptive process that allows bacteria to respond to amino acid starvation, resulting in the coordinated regulation of numerous cellular activities. The polypeptide is Guanosine-5'-triphosphate,3'-diphosphate pyrophosphatase (Aliivibrio fischeri (strain MJ11) (Vibrio fischeri)).